A 409-amino-acid chain; its full sequence is Snake venom metalloproteinase BITM02A (409 aa).

The first 20 residues, Met1–Ser20, serve as a signal peptide directing secretion. Positions Ile21–Pro189 are excised as a propeptide. The 197-residue stretch at Arg193 to Arg389 folds into the Peptidase M12B domain. Ca(2+)-binding residues include Glu196 and Asp280. 3 disulfide bridges follow: Cys304–Cys384, Cys344–Cys368, and Cys346–Cys351. His329 contributes to the Zn(2+) binding site. Residue Glu330 is part of the active site. The Zn(2+) site is built by His333 and His339. Residues Cys384, Asn387, Val399, Asn402, Leu404, Glu406, and Glu409 each contribute to the Ca(2+) site. Positions Leu390–Glu409 are excised as a propeptide.

It belongs to the venom metalloproteinase (M12B) family. P-I subfamily. Monomer. Zn(2+) is required as a cofactor. In terms of tissue distribution, expressed by the venom gland.

The protein localises to the secreted. Its function is as follows. Snake venom metalloproteinase that impairs hemostasis in the envenomed animal. In Bothrops insularis (Golden lancehead), this protein is Snake venom metalloproteinase BITM02A.